Reading from the N-terminus, the 221-residue chain is UPF0502 protein Sputcn32_1644 (221 aa).

The protein belongs to the UPF0502 family.

This chain is UPF0502 protein Sputcn32_1644, found in Shewanella putrefaciens (strain CN-32 / ATCC BAA-453).